The chain runs to 919 residues: Kinesin-like protein KIN-6 (919 aa).

The tract at residues 1–59 (MVRLSTKPPNPKVEMNLKEPPITGAGAGAAASPPAPSTLRRNPPRSARPPPTPLPNSKP) is disordered. A compositionally biased stretch (low complexity) spans 28–45 (GAAASPPAPSTLRRNPPR). The segment covering 46-56 (SARPPPTPLPN) has biased composition (pro residues). One can recognise a Kinesin motor domain in the interval 72 to 415 (RLKVFLRIRP…LRQASPYMKI (344 aa)). Residue 171 to 178 (GPTGSGKT) participates in ATP binding. 5 disordered regions span residues 591-615 (EEVS…TGTG), 674-700 (SESC…SFTD), 711-730 (SPQF…EEER), 737-764 (TTEG…EVNS), and 886-919 (KEEK…GRAQ). The span at 597 to 612 (STGHGPERSSDYDDKT) shows a compositional bias: basic and acidic residues. Residues 685 to 697 (HSSSSLDHPSDQS) show a composition bias toward low complexity. Positions 755–764 (TPSCSQEVNS) are enriched in polar residues. Residues 886-912 (KEEKVKSSRDAMGRSDKLIRLLTDHPP) are compositionally biased toward basic and acidic residues.

Belongs to the TRAFAC class myosin-kinesin ATPase superfamily. Kinesin family. KIN-6 subfamily.

The chain is Kinesin-like protein KIN-6 from Oryza sativa subsp. japonica (Rice).